Consider the following 427-residue polypeptide: Peptidase B (427 aa).

Positions 195 and 200 each coordinate Mn(2+). Lys-207 is a catalytic residue. 3 residues coordinate Mn(2+): Asp-218, Asp-277, and Glu-279. Arg-281 is an active-site residue.

Belongs to the peptidase M17 family. In terms of assembly, homohexamer. Requires Mn(2+) as cofactor.

The protein localises to the cytoplasm. It catalyses the reaction Release of an N-terminal amino acid, Xaa, from a peptide or arylamide. Xaa is preferably Glu or Asp but may be other amino acids, including Leu, Met, His, Cys and Gln.. In terms of biological role, probably plays an important role in intracellular peptide degradation. The sequence is that of Peptidase B from Shigella flexneri serotype 5b (strain 8401).